Reading from the N-terminus, the 588-residue chain is Adenine deaminase (588 aa).

This sequence belongs to the metallo-dependent hydrolases superfamily. Adenine deaminase family. In terms of assembly, homodimer. Requires Mn(2+) as cofactor.

The catalysed reaction is adenine + H2O + H(+) = hypoxanthine + NH4(+). The protein is Adenine deaminase of Escherichia coli O9:H4 (strain HS).